Reading from the N-terminus, the 139-residue chain is Metallothiol transferase FosB (139 aa).

A VOC domain is found at 4 to 119; that stretch reads GINHITYSVS…DGHKLELHTG (116 aa). Mg(2+) is bound by residues histidine 7, histidine 66, and glutamate 115. Residue glutamate 115 is the Proton donor/acceptor of the active site.

It belongs to the fosfomycin resistance protein family. FosB subfamily. As to quaternary structure, homodimer. Requires Mg(2+) as cofactor.

The protein localises to the cytoplasm. Metallothiol transferase which confers resistance to fosfomycin by catalyzing the addition of a thiol cofactor to fosfomycin. L-cysteine is probably the physiological thiol donor. The sequence is that of Metallothiol transferase FosB from Staphylococcus haemolyticus.